The sequence spans 427 residues: UDP-N-acetylglucosamine 1-carboxyvinyltransferase (427 aa).

22–23 (KN) serves as a coordination point for phosphoenolpyruvate. Arginine 99 is a binding site for UDP-N-acetyl-alpha-D-glucosamine. Cysteine 123 serves as the catalytic Proton donor. Cysteine 123 carries the 2-(S-cysteinyl)pyruvic acid O-phosphothioketal modification. UDP-N-acetyl-alpha-D-glucosamine-binding positions include 128–132 (RPIDL), aspartate 313, and isoleucine 335.

This sequence belongs to the EPSP synthase family. MurA subfamily.

It localises to the cytoplasm. It catalyses the reaction phosphoenolpyruvate + UDP-N-acetyl-alpha-D-glucosamine = UDP-N-acetyl-3-O-(1-carboxyvinyl)-alpha-D-glucosamine + phosphate. It participates in cell wall biogenesis; peptidoglycan biosynthesis. In terms of biological role, cell wall formation. Adds enolpyruvyl to UDP-N-acetylglucosamine. This is UDP-N-acetylglucosamine 1-carboxyvinyltransferase from Sphingopyxis alaskensis (strain DSM 13593 / LMG 18877 / RB2256) (Sphingomonas alaskensis).